The sequence spans 276 residues: Alpha N-terminal protein methyltransferase 1 (276 aa).

The interval 1 to 57 (MTTTLEEQLSDKLQMMDETTDKVQGSSKQKDDSSIAASSDAKTASPSSSDSSTKVAA) is disordered. A compositionally biased stretch (low complexity) spans 34-57 (SIAASSDAKTASPSSSDSSTKVAA). S-adenosyl-L-methionine-binding positions include G114, R119, 136–138 (EQD), 167–168 (LQ), and Q182.

It belongs to the methyltransferase superfamily. NTM1 family.

It catalyses the reaction N-terminal L-alanyl-L-prolyl-L-lysyl-[protein] + 3 S-adenosyl-L-methionine = N-terminal N,N,N-trimethyl-L-alanyl-L-prolyl-L-lysyl-[protein] + 3 S-adenosyl-L-homocysteine + 3 H(+). The enzyme catalyses N-terminal L-seryl-L-prolyl-L-lysyl-[protein] + 3 S-adenosyl-L-methionine = N-terminal N,N,N-trimethyl-L-seryl-L-prolyl-L-lysyl-[protein] + 3 S-adenosyl-L-homocysteine + 3 H(+). The catalysed reaction is N-terminal L-prolyl-L-prolyl-L-lysyl-[protein] + 2 S-adenosyl-L-methionine = N-terminal N,N-dimethyl-L-prolyl-L-prolyl-L-lysyl-[protein] + 2 S-adenosyl-L-homocysteine + 2 H(+). In terms of biological role, alpha-N-methyltransferase that methylates the N-terminus of target proteins containing the N-terminal motif [Ala/Pro/Ser]-Pro-Lys when the initiator Met is cleaved. Specifically catalyzes mono-, di- or tri-methylation of exposed alpha-amino group of Ala or Ser residue in the [Ala/Ser]-Pro-Lys motif and mono- or di-methylation of Pro in the Pro-Pro-Lys motif. The polypeptide is Alpha N-terminal protein methyltransferase 1 (Ntmt) (Drosophila melanogaster (Fruit fly)).